The following is a 521-amino-acid chain: uncharacterized protein (521 aa).

An N-terminal signal peptide occupies residues 1-22 (MGFKLKGFGFLTLFASQAFLTA). Cys-23 is lipidated: N-palmitoyl cysteine. Residue Cys-23 is the site of S-diacylglycerol cysteine attachment.

It belongs to the MG067/MG068/MG395 family.

The protein resides in the cell membrane. This is an uncharacterized protein from Mycoplasma pneumoniae (strain ATCC 29342 / M129 / Subtype 1) (Mycoplasmoides pneumoniae).